The chain runs to 75 residues: UPF0352 protein KPN78578_25810 (75 aa).

This sequence belongs to the UPF0352 family.

The chain is UPF0352 protein KPN78578_25810 from Klebsiella pneumoniae subsp. pneumoniae (strain ATCC 700721 / MGH 78578).